A 363-amino-acid chain; its full sequence is MKGNSTLATTSKNITSGLHFGLVNISGNNESTLNCSQKPSDKHLDAIPILYYIIFVIGFLVNIVVVTLFCCQKGPKKVSSIYIFNLAVADLLLLATLPLWATYYSYRYDWLFGPVMCKVFGSFLTLNMFASIFFITCMSVDRYQSVIYPFLSQRRNPWQASYIVPLVWCMACLSSLPTFYFRDVRTIEYLGVNACIMAFPPEKYAQWSAGIALMKNILGFIIPLIFIATCYFGIRKHLLKTNSYGKNRITRDQVLKMAAAVVLAFIICWLPFHVLTFLDALAWMGVINSCEVIAVIDLALPFAILLGFTNSCVNPFLYCFVGNRFQQKLRSVFRVPITWLQGKRESMSCRKSSSLREMETFVS.

Residues 1–45 are Extracellular-facing; it reads MKGNSTLATTSKNITSGLHFGLVNISGNNESTLNCSQKPSDKHLD. Asn4, Asn13, Asn24, Asn29, and Asn34 each carry an N-linked (GlcNAc...) asparagine glycan. Cystine bridges form between Cys35–Cys290 and Cys117–Cys195. A helical transmembrane segment spans residues 46-70; it reads AIPILYYIIFVIGFLVNIVVVTLFC. At 71 to 80 the chain is on the cytoplasmic side; sequence CQKGPKKVSS. The chain crosses the membrane as a helical span at residues 81 to 104; sequence IYIFNLAVADLLLLATLPLWATYY. Angiotensin II is bound by residues Tyr103 and Tyr104. Residues 105 to 114 lie on the Extracellular side of the membrane; it reads SYRYDWLFGP. A helical transmembrane segment spans residues 115-140; sequence VMCKVFGSFLTLNMFASIFFITCMSV. The Cytoplasmic portion of the chain corresponds to 141–159; the sequence is DRYQSVIYPFLSQRRNPWQ. The chain crosses the membrane as a helical span at residues 160–181; sequence ASYIVPLVWCMACLSSLPTFYF. 3 residues coordinate angiotensin II: Arg182, Tyr204, and Lys215. The Extracellular segment spans residues 182–206; that stretch reads RDVRTIEYLGVNACIMAFPPEKYAQ. Residues 207-232 traverse the membrane as a helical segment; it reads WSAGIALMKNILGFIIPLIFIATCYF. The Cytoplasmic segment spans residues 233–257; it reads GIRKHLLKTNSYGKNRITRDQVLKM. Residues 258–281 form a helical membrane-spanning segment; the sequence is AAAVVLAFIICWLPFHVLTFLDAL. Residue Asp279 participates in angiotensin II binding. Topologically, residues 282-294 are extracellular; it reads AWMGVINSCEVIA. The helical transmembrane segment at 295–320 threads the bilayer; that stretch reads VIDLALPFAILLGFTNSCVNPFLYCF. Asp297 is a binding site for angiotensin II. The Cytoplasmic portion of the chain corresponds to 321–363; it reads VGNRFQQKLRSVFRVPITWLQGKRESMSCRKSSSLREMETFVS. Positions 324–333 are helix VIII; it reads RFQQKLRSVF.

This sequence belongs to the G-protein coupled receptor 1 family. Interacts with MTUS1. In adult, highly expressed in myometrium with lower levels in adrenal gland and fallopian tube. Expressed in the cerebellum. Very highly expressed in fetal kidney and intestine.

The protein resides in the cell membrane. In terms of biological role, receptor for angiotensin II, a vasoconstricting peptide. Signals primarily via a non-canonical G-protein- and beta-arrestin independent pathways. Cooperates with MTUS1 to inhibit ERK2 activation and cell proliferation. This is Type-2 angiotensin II receptor from Homo sapiens (Human).